Consider the following 216-residue polypeptide: Protein-L-isoaspartate O-methyltransferase (216 aa).

The active site involves S61.

The protein belongs to the methyltransferase superfamily. L-isoaspartyl/D-aspartyl protein methyltransferase family.

It localises to the cytoplasm. The enzyme catalyses [protein]-L-isoaspartate + S-adenosyl-L-methionine = [protein]-L-isoaspartate alpha-methyl ester + S-adenosyl-L-homocysteine. Its function is as follows. Catalyzes the methyl esterification of L-isoaspartyl residues in peptides and proteins that result from spontaneous decomposition of normal L-aspartyl and L-asparaginyl residues. It plays a role in the repair and/or degradation of damaged proteins. The sequence is that of Protein-L-isoaspartate O-methyltransferase (pcm) from Pyrococcus abyssi (strain GE5 / Orsay).